We begin with the raw amino-acid sequence, 247 residues long: MQEFNPANVPAHVAIIMDGNGRWANARGLPRTMGHRKGVEAVRGAVRTAAEIGIRYLTLFAFSSENWNRPENEVSDLMGLLKAFIRRDLADLHRENVRIRVIGDRSNLSGDILPLLIEAEETTIANTGITVVIAFNYGARDELARAMRRLAGEVAAGRLRPEEITAERISSTIDTAGIPDPDLIIRTSGEERLSNFLLWQGAYSELLFIPDLWPDFTRETFFAAIEQYACRERRFGGLTQPTLAVGS.

Asp18 is an active-site residue. Residue Asp18 participates in Mg(2+) binding. Residues 19 to 22 (GNGR), Trp23, Arg31, His35, and 63 to 65 (SSE) contribute to the substrate site. The active-site Proton acceptor is the Asn66. Substrate-binding positions include Trp67, Arg69, Arg186, and 192–194 (RLS). Glu205 is a Mg(2+) binding site.

The protein belongs to the UPP synthase family. In terms of assembly, homodimer. Mg(2+) is required as a cofactor.

Functionally, catalyzes the condensation of isopentenyl diphosphate (IPP) with allylic pyrophosphates generating different type of terpenoids. The chain is Isoprenyl transferase from Rhizobium meliloti (strain 1021) (Ensifer meliloti).